Reading from the N-terminus, the 343-residue chain is Heat-inducible transcription repressor HrcA (343 aa).

This sequence belongs to the HrcA family.

Functionally, negative regulator of class I heat shock genes (grpE-dnaK-dnaJ and groELS operons). Prevents heat-shock induction of these operons. In Mycobacterium ulcerans (strain Agy99), this protein is Heat-inducible transcription repressor HrcA.